A 198-amino-acid chain; its full sequence is Recombination protein RecR (198 aa).

A C4-type zinc finger spans residues 56 to 71; it reads CTECRDFSETKICAIC. Residues 79 to 174 enclose the Toprim domain; sequence HQLCVVESPP…RPSRLAQGLP (96 aa).

Belongs to the RecR family.

In terms of biological role, may play a role in DNA repair. It seems to be involved in an RecBC-independent recombinational process of DNA repair. It may act with RecF and RecO. The polypeptide is Recombination protein RecR (Xylella fastidiosa (strain Temecula1 / ATCC 700964)).